The sequence spans 441 residues: Glutamate-1-semialdehyde 2,1-aminomutase (441 aa).

Residue K279 is modified to N6-(pyridoxal phosphate)lysine.

This sequence belongs to the class-III pyridoxal-phosphate-dependent aminotransferase family. HemL subfamily. In terms of assembly, homodimer. Pyridoxal 5'-phosphate is required as a cofactor.

It is found in the cytoplasm. The catalysed reaction is (S)-4-amino-5-oxopentanoate = 5-aminolevulinate. Its pathway is porphyrin-containing compound metabolism; protoporphyrin-IX biosynthesis; 5-aminolevulinate from L-glutamyl-tRNA(Glu): step 2/2. The chain is Glutamate-1-semialdehyde 2,1-aminomutase from Leptospira borgpetersenii serovar Hardjo-bovis (strain JB197).